A 194-amino-acid chain; its full sequence is MDEDGLPLMGSGIDLTKVPAIQQKRTVAFLNQFVVHTVQFLNRFSTVCEEKLADLSLRIQQIETTLNILDAKLSSIPGLDDVTFEVSPVNVTRITNGTHSEATSEQSQQNSLQDSGPQESEVTPENILTVAKDPRYARYHKMVQVGVPVMAIRNKMISEGLDPDLLERPDAPVPDGEGEKNTEESSDSESSFSD.

M1 is modified (N-acetylmethionine). The stretch at 46–74 (TVCEEKLADLSLRIQQIETTLNILDAKLS) forms a coiled coil. Polar residues predominate over residues 98 to 123 (THSEATSEQSQQNSLQDSGPQESEVT). Disordered regions lie at residues 98–125 (THSE…VTPE) and 158–194 (SEGL…SFSD).

This sequence belongs to the CCDC53 family. In terms of assembly, component of the WASH core complex also described as WASH regulatory complex (SHRC) composed of WASHC1, WASHC2, WASHC3, WASHC4 and WASHC5. The WASH core complex associates via WASHC2 with the F-actin-capping protein dimer (formed by CAPZA1, CAPZA2 or CAPZA3 and CAPZB) in a transient or substoichiometric manner which was initially described as WASH complex.

The protein resides in the early endosome. Functionally, acts as a component of the WASH core complex that functions as a nucleation-promoting factor (NPF) at the surface of endosomes, where it recruits and activates the Arp2/3 complex to induce actin polymerization, playing a key role in the fission of tubules that serve as transport intermediates during endosome sorting. This Bos taurus (Bovine) protein is WASH complex subunit 3.